The following is a 130-amino-acid chain: Small ribosomal subunit protein uS9 (130 aa).

It belongs to the universal ribosomal protein uS9 family.

The polypeptide is Small ribosomal subunit protein uS9 (Bordetella avium (strain 197N)).